The primary structure comprises 89 residues: Cell division protein FtsL (89 aa).

Residues 1–6 lie on the Cytoplasmic side of the membrane; sequence MAMNKL. The chain crosses the membrane as a helical span at residues 7 to 24; sequence NFLLLLAVCVSAFSVVMQ. Residues 25–89 are Periplasmic-facing; that stretch reads QNQYRLNFTA…GNTFMVEHQR (65 aa). A coiled-coil region spans residues 33 to 73; it reads TALDKAKKQEIALEQDYAQMRLQQARLANHEAIRAAAEKQN.

It belongs to the FtsL family. Part of a complex composed of FtsB, FtsL and FtsQ.

The protein localises to the cell inner membrane. Functionally, essential cell division protein. May link together the upstream cell division proteins, which are predominantly cytoplasmic, with the downstream cell division proteins, which are predominantly periplasmic. The polypeptide is Cell division protein FtsL (Neisseria meningitidis serogroup B (strain ATCC BAA-335 / MC58)).